A 212-amino-acid polypeptide reads, in one-letter code: Large ribosomal subunit protein bL25 (212 aa).

The interval 183 to 212 (HDLPVASIHKPKGAKADDAEGEEGEEGGEE) is disordered. The segment covering 201 to 212 (AEGEEGEEGGEE) has biased composition (acidic residues).

This sequence belongs to the bacterial ribosomal protein bL25 family. CTC subfamily. Part of the 50S ribosomal subunit; part of the 5S rRNA/L5/L18/L25 subcomplex. Contacts the 5S rRNA. Binds to the 5S rRNA independently of L5 and L18.

In terms of biological role, this is one of the proteins that binds to the 5S RNA in the ribosome where it forms part of the central protuberance. This chain is Large ribosomal subunit protein bL25, found in Marinobacter nauticus (strain ATCC 700491 / DSM 11845 / VT8) (Marinobacter aquaeolei).